A 587-amino-acid polypeptide reads, in one-letter code: APOBEC1 complementation factor (587 aa).

RRM domains lie at 56-134 (CEIF…ASVD), 136-218 (CRLF…WAEP), and 231-303 (KILY…LAKP). The tract at residues 360-409 (HFPATKGHLSNRAIIRAPSVRGAAGVRGLGGRGYLAYTGLGRGYQVKGDK) is required for nuclear localization. T491 carries the phosphothreonine modification.

Part of the apolipoprotein B mRNA editing complex with APOBEC1. Interacts with TNPO2; TNPO2 may be responsible for transport of A1CF into the nucleus. Interacts with SYNCRIP. Interacts with CELF2/CUGBP2. Interacts with RBM47.

It localises to the nucleus. The protein resides in the endoplasmic reticulum. Its subcellular location is the cytoplasm. Its function is as follows. Essential component of the apolipoprotein B mRNA editing enzyme complex which is responsible for the postranscriptional editing of a CAA codon for Gln to a UAA codon for stop in APOB mRNA. Binds to APOB mRNA and is probably responsible for docking the catalytic subunit, APOBEC1, to the mRNA to allow it to deaminate its target cytosine. The complex also seems to protect the edited APOB mRNA from nonsense-mediated decay. This chain is APOBEC1 complementation factor (A1CF), found in Pongo abelii (Sumatran orangutan).